A 62-amino-acid chain; its full sequence is Ponericin-W-like 32.2 (62 aa).

Positions 1 to 23 are cleaved as a signal peptide; sequence MKCKKQLLVIFFAYFLVVNESEA. A propeptide spanning residues 49 to 62 is cleaved from the precursor; that stretch reads RALMKRDLEDIMDP.

It belongs to the non-disulfide-bridged peptide (NDBP) superfamily. Medium-length antimicrobial peptide (group 3) family. Ponericin-W subfamily. As to expression, expressed by the venom gland.

It is found in the secreted. The protein resides in the target cell membrane. In terms of biological role, antimicrobial peptide with potent activity against a range of Gram-positive and Gram-negative bacteria. Has high hemolytic activity against erythrocytes. May act by disrupting the integrity of the bacterial cell membrane. This Lychas mucronatus (Chinese swimming scorpion) protein is Ponericin-W-like 32.2.